The chain runs to 230 residues: Large ribosomal subunit protein uL1 (230 aa).

This sequence belongs to the universal ribosomal protein uL1 family. As to quaternary structure, part of the 50S ribosomal subunit.

In terms of biological role, binds directly to 23S rRNA. The L1 stalk is quite mobile in the ribosome, and is involved in E site tRNA release. Protein L1 is also a translational repressor protein, it controls the translation of the L11 operon by binding to its mRNA. The protein is Large ribosomal subunit protein uL1 of Bacillus cereus (strain G9842).